The following is a 502-amino-acid chain: MSIKAEEISALIKQQIQNYQSEIEVKDVGTVIQVGDGIARVHGLDNIMAGELVEFSNGVMGMAQNLEESNVGIVILGPYKDIREGDDVKRTGRIMEVPVGEELIGRIVNPLGQPVDGLGPILTSKTRPIESEAPGVMDRKSVHEPLQTGIKAIDALIPIGRGQRELIIGDRQTGKTSVAIDTILNQKDQDMICIYVAIGQKESTVRGVVETLRKHGALDYTIVVTASASQPAPLLYLAPYAGVTMGEEFMYNGKHVLVVYDDLSKQAAAYRELSLLLRRPPGREAFPGDVFYLHSRLLERAAKLSDAKGGGSITALPFVETQAGDISAYIPTNVISITDGQIFLQSDLFFSGVRPAVNAGLSVSRVGGSAQIKAMKKVAGTLRLDLASYRELEAFAQFGSDLDQATQAKLNRGARTVEVLKQDLNKPLKVEKQVAILYALTRGYLDDVAVADVKRFEAELFMYIEENHKGLFDTISQTGNMPADEEWNTAIEGFKRTFAPSN.

169–176 (GDRQTGKT) is a binding site for ATP.

Belongs to the ATPase alpha/beta chains family. In terms of assembly, F-type ATPases have 2 components, CF(1) - the catalytic core - and CF(0) - the membrane proton channel. CF(1) has five subunits: alpha(3), beta(3), gamma(1), delta(1), epsilon(1). CF(0) has three main subunits: a(1), b(2) and c(9-12). The alpha and beta chains form an alternating ring which encloses part of the gamma chain. CF(1) is attached to CF(0) by a central stalk formed by the gamma and epsilon chains, while a peripheral stalk is formed by the delta and b chains.

It localises to the cell membrane. The catalysed reaction is ATP + H2O + 4 H(+)(in) = ADP + phosphate + 5 H(+)(out). Functionally, produces ATP from ADP in the presence of a proton gradient across the membrane. The alpha chain is a regulatory subunit. In Bacillus pumilus (strain SAFR-032), this protein is ATP synthase subunit alpha.